The primary structure comprises 368 residues: MLVPPDMLVAQTRMIYQMNRYCAERVQARMFKTSTAIREICKIVQDILKEVELQEPRFISSLVECNGRFEGVEVISPNEFEIVLYLNQMGVFNFVDDGTLPGCAVLKLSDGRKRSMSLWVEFITASGYLSSRKIRSRFQTLVAQACDKSMYRDMVKIIGDTTEVKLRIRERYVVQITPAFKCSGIWPRSAAHWPMPHIPWPHPNIVAEVKTEGFDLLSKDSAAMQNKNNNAASMEGDAWVLSFYEAENRLLQGGCRRRCLSMLKTLRDRHLELPGSPISAYHLKNLLLYECEKHPRDYEWDESCIADRINGIFLQLISCLQYRRCPHYFLPSLDMFKGKSPSALEQAAKQVWRLTREMLTNANAFEKL.

Belongs to the mab-21 family.

The chain is Protein mab-21-like from Drosophila pseudoobscura pseudoobscura (Fruit fly).